We begin with the raw amino-acid sequence, 256 residues long: 5-keto-4-deoxy-D-glucarate aldolase (256 aa).

The active-site Proton acceptor is the H50. Q151 provides a ligand contact to substrate. E153 contacts Mg(2+). Residues S178 and D179 each coordinate substrate. D179 is a binding site for Mg(2+).

Belongs to the HpcH/HpaI aldolase family. KDGluc aldolase subfamily. As to quaternary structure, homohexamer; trimer of dimers. The cofactor is Mg(2+).

It catalyses the reaction 5-dehydro-4-deoxy-D-glucarate = 2-hydroxy-3-oxopropanoate + pyruvate. It carries out the reaction 2-dehydro-3-deoxy-D-glucarate = 2-hydroxy-3-oxopropanoate + pyruvate. It functions in the pathway carbohydrate acid metabolism; galactarate degradation; D-glycerate from galactarate: step 2/3. Its function is as follows. Catalyzes the reversible retro-aldol cleavage of both 5-keto-4-deoxy-D-glucarate and 2-keto-3-deoxy-D-glucarate to pyruvate and tartronic semialdehyde. This chain is 5-keto-4-deoxy-D-glucarate aldolase, found in Klebsiella pneumoniae subsp. pneumoniae (strain ATCC 700721 / MGH 78578).